We begin with the raw amino-acid sequence, 1505 residues long: G patch domain-containing protein 8 (1505 aa).

The 47-residue stretch at 40–86 (SDNIGHRLLQKHGWKLGQGLGKSLQGRTDPIPIVVKYDVMGMGRMEM) folds into the G-patch domain. Residues 89 to 124 (DYAEDATERRRVLEVEKEDTEELRQKYKDYVDKEKA) are a coiled coil. The C2H2-type zinc-finger motif lies at 136–160 (FYCELCDKQYQKHQEFDNHINSYDH). Basic and acidic residues-rich tracts occupy residues 166-175 (LKDLKQREFA) and 182-206 (SRKDEKKQEKALRRLHELAEQRKQA). The segment at 166–244 (LKDLKQREFA…SSTNSGASAV (79 aa)) is disordered. Acidic residues predominate over residues 223-233 (VDEDGGEEDKD). K311 is covalently cross-linked (Glycyl lysine isopeptide (Lys-Gly) (interchain with G-Cter in SUMO2)). 2 stretches are compositionally biased toward basic and acidic residues: residues 322–339 (HAEEGSSEDGTKADEKSS) and 421–436 (EGDHSAHSKSAPENRK). Disordered regions lie at residues 322–393 (HAEE…EPEY) and 419–537 (QMEG…FPVL). Polar residues predominate over residues 437 to 449 (SSSPKPQGCSKTA). K479 is subject to N6-acetyllysine. A Glycyl lysine isopeptide (Lys-Gly) (interchain with G-Cter in SUMO2) cross-link involves residue K573. Composition is skewed to basic and acidic residues over residues 575-612 (SRNKDAKAKGTEKPKDVAGSSKDHLQSLDPREPNKSQE) and 648-665 (SETEDTGRSHPSKKEPSG). Positions 575 to 1304 (SRNKDAKAKG…ESTDGTEDAS (730 aa)) are disordered. S648 is modified (phosphoserine). Residues 666–687 (KSHRHKKKKKHKKSSKHKRKHK) are compositionally biased toward basic residues. Residues 688-702 (ADTEEKSSKAESGEK) show a composition bias toward basic and acidic residues. Positions 703 to 715 (SKKRKKRKRKKNK) are enriched in basic residues. Phosphoserine occurs at positions 733, 735, and 753. Positions 745–767 (AQDDSQRRSLPAEEGNSGKKDDG) are enriched in basic and acidic residues. A compositionally biased stretch (basic residues) spans 794 to 804 (ANTKHSSRSSH). Acidic residues predominate over residues 832–849 (SEEEEEEEEEEEEEDEDS). Positions 856-871 (SRSRSGHRHSSHRSSR) are enriched in basic residues. A compositionally biased stretch (low complexity) spans 872–900 (RSYSSSSDASSDQSCYSRQHSYSDDSYSD). S915 and S918 each carry phosphoserine. Residues 923–932 (SKHRSKRHKY) show a composition bias toward basic residues. Residues S985, S1013, S1018, S1037, and S1039 each carry the phosphoserine modification. The segment covering 1017 to 1031 (ESPEERRSGRRDFIR) has biased composition (basic and acidic residues). The segment covering 1050 to 1063 (GPGKKEDGRGDDSK) has biased composition (basic and acidic residues). S1085 carries the post-translational modification Phosphoserine. Composition is skewed to basic and acidic residues over residues 1097–1112 (LLEKIQSRKVERKPNV), 1163–1185 (KKCEESGLERGEEQEHSEPEEGS), and 1211–1220 (EEPKSEEATA). A Glycyl lysine isopeptide (Lys-Gly) (interchain with G-Cter in SUMO2) cross-link involves residue K1109. S1179 carries the post-translational modification Phosphoserine.

This is G patch domain-containing protein 8 (Gpatch8) from Mus musculus (Mouse).